A 456-amino-acid chain; its full sequence is Bifunctional protein GlmU (456 aa).

The tract at residues 1-229 (MSSHAMSVVI…LSEVEGVNNR (229 aa)) is pyrophosphorylase. Residues 11-14 (LAAG), K25, Q76, 81-82 (GT), 103-105 (YGD), G140, E154, N169, and N227 each bind UDP-N-acetyl-alpha-D-glucosamine. Residue D105 participates in Mg(2+) binding. N227 lines the Mg(2+) pocket. The linker stretch occupies residues 230 to 250 (LQLARLEHVYQAEQAEKLLLA). Positions 251-456 (GVMLRDPARF…QGWRRPVKKK (206 aa)) are N-acetyltransferase. 2 residues coordinate UDP-N-acetyl-alpha-D-glucosamine: R333 and K351. H363 functions as the Proton acceptor in the catalytic mechanism. 2 residues coordinate UDP-N-acetyl-alpha-D-glucosamine: Y366 and N377. Acetyl-CoA is bound by residues A380, 386 to 387 (NY), S405, A423, and R440.

This sequence in the N-terminal section; belongs to the N-acetylglucosamine-1-phosphate uridyltransferase family. In the C-terminal section; belongs to the transferase hexapeptide repeat family. In terms of assembly, homotrimer. It depends on Mg(2+) as a cofactor.

It is found in the cytoplasm. The enzyme catalyses alpha-D-glucosamine 1-phosphate + acetyl-CoA = N-acetyl-alpha-D-glucosamine 1-phosphate + CoA + H(+). It carries out the reaction N-acetyl-alpha-D-glucosamine 1-phosphate + UTP + H(+) = UDP-N-acetyl-alpha-D-glucosamine + diphosphate. It functions in the pathway nucleotide-sugar biosynthesis; UDP-N-acetyl-alpha-D-glucosamine biosynthesis; N-acetyl-alpha-D-glucosamine 1-phosphate from alpha-D-glucosamine 6-phosphate (route II): step 2/2. It participates in nucleotide-sugar biosynthesis; UDP-N-acetyl-alpha-D-glucosamine biosynthesis; UDP-N-acetyl-alpha-D-glucosamine from N-acetyl-alpha-D-glucosamine 1-phosphate: step 1/1. Its pathway is bacterial outer membrane biogenesis; LPS lipid A biosynthesis. In terms of biological role, catalyzes the last two sequential reactions in the de novo biosynthetic pathway for UDP-N-acetylglucosamine (UDP-GlcNAc). The C-terminal domain catalyzes the transfer of acetyl group from acetyl coenzyme A to glucosamine-1-phosphate (GlcN-1-P) to produce N-acetylglucosamine-1-phosphate (GlcNAc-1-P), which is converted into UDP-GlcNAc by the transfer of uridine 5-monophosphate (from uridine 5-triphosphate), a reaction catalyzed by the N-terminal domain. The chain is Bifunctional protein GlmU from Cronobacter sakazakii (strain ATCC BAA-894) (Enterobacter sakazakii).